The following is a 557-amino-acid chain: Formate--tetrahydrofolate ligase 2 (557 aa).

66–73 lines the ATP pocket; the sequence is TPAGEGKT.

This sequence belongs to the formate--tetrahydrofolate ligase family.

The catalysed reaction is (6S)-5,6,7,8-tetrahydrofolate + formate + ATP = (6R)-10-formyltetrahydrofolate + ADP + phosphate. Its pathway is one-carbon metabolism; tetrahydrofolate interconversion. This Streptococcus pyogenes serotype M4 (strain MGAS10750) protein is Formate--tetrahydrofolate ligase 2.